The chain runs to 166 residues: Cofilin-1 (166 aa).

Residue alanine 2 is modified to N-acetylalanine. Serine 3 carries the phosphoserine; by NRK modification. One can recognise an ADF-H domain in the interval 4-153 (GVAVSDGVIK…KDRCTLAEKL (150 aa)). Phosphoserine is present on serine 8. Lysine 13 is modified (N6-acetyllysine). Threonine 25 is modified (phosphothreonine). Residues 30 to 34 (KKRKK) carry the Nuclear localization signal motif. Position 41 is a phosphoserine (serine 41). Threonine 63 carries the post-translational modification Phosphothreonine. Tyrosine 68 is subject to Phosphotyrosine. N6-acetyllysine is present on lysine 73. The residue at position 82 (tyrosine 82) is a Phosphotyrosine. Serine 108 is subject to Phosphoserine. Residue lysine 132 forms a Glycyl lysine isopeptide (Lys-Gly) (interchain with G-Cter in SUMO2) linkage. Tyrosine 140 carries the phosphotyrosine modification. At lysine 144 the chain carries N6-acetyllysine. Serine 156 carries the post-translational modification Phosphoserine.

The protein belongs to the actin-binding proteins ADF family. In terms of assembly, can bind G- and F-actin in a 1:1 ratio of cofilin to actin. It is a major component of intranuclear and cytoplasmic actin rods. Interacts with the subcortical maternal complex (SCMC) via interaction with TLE6 isoform 1 and NLRP5. Interacts with C9orf72. As to quaternary structure, (Microbial infection) Interacts with human respiratory syncytial virus (HRSV) matrix protein; this interaction probably facilitates viral replication. Post-translationally, inactivated by phosphorylation on Ser-3. Phosphorylated on Ser-3 in resting cells. Dephosphorylated by PDXP/chronophin; this restores its activity in promoting actin filament depolymerization. The phosphorylation of Ser-24 may prevent recognition of the nuclear localization signal. Phosphorylated via a ARRB1-RAC1-LIMK1-PAK1 cascade upon active ligand stimulation of atypical chemokine receptor ACKR2. Widely distributed in various tissues.

Its subcellular location is the nucleus matrix. It is found in the cytoplasm. The protein resides in the cytoskeleton. It localises to the cell projection. The protein localises to the ruffle membrane. Its subcellular location is the lamellipodium membrane. It is found in the lamellipodium. The protein resides in the growth cone. It localises to the axon. Binds to F-actin and exhibits pH-sensitive F-actin depolymerizing activity. In conjunction with the subcortical maternal complex (SCMC), plays an essential role for zygotes to progress beyond the first embryonic cell divisions via regulation of actin dynamics. Required for the centralization of the mitotic spindle and symmetric division of zygotes. Plays a role in the regulation of cell morphology and cytoskeletal organization in epithelial cells. Required for the up-regulation of atypical chemokine receptor ACKR2 from endosomal compartment to cell membrane, increasing its efficiency in chemokine uptake and degradation. Required for neural tube morphogenesis and neural crest cell migration. This Homo sapiens (Human) protein is Cofilin-1 (CFL1).